The sequence spans 345 residues: Phosphoribosylformylglycinamidine cyclo-ligase (345 aa).

The protein belongs to the AIR synthase family.

It is found in the cytoplasm. The catalysed reaction is 2-formamido-N(1)-(5-O-phospho-beta-D-ribosyl)acetamidine + ATP = 5-amino-1-(5-phospho-beta-D-ribosyl)imidazole + ADP + phosphate + H(+). It participates in purine metabolism; IMP biosynthesis via de novo pathway; 5-amino-1-(5-phospho-D-ribosyl)imidazole from N(2)-formyl-N(1)-(5-phospho-D-ribosyl)glycinamide: step 2/2. The sequence is that of Phosphoribosylformylglycinamidine cyclo-ligase from Pseudoalteromonas atlantica (strain T6c / ATCC BAA-1087).